Reading from the N-terminus, the 278-residue chain is MTRVSSVSASCTTTNPPKNTREDMSRVGAHLTIQNDFRHLIMQITEKIFTKSSLGSMKFEELKIIHMGCQTVFMRGILTLLTRECFWNTGNDDIRILNRNIPTSYWLEIHTLLEKFIPTTDPWIFSDVYAENTLQYLQKQNACVRLYQEYMLSKLGLYVPLPDFLREDVNILFHLGTVTQHRLFKTFMIFQKYWGIDSYEPIVRTIVRKTWFFFLILWGQLRVDSNVFCEQDFGHEAGILSYLQSDYLSFMGIGQIDISINKSSFPDVFSITDIKPLM.

Residues 1-18 show a composition bias toward polar residues; that stretch reads MTRVSSVSASCTTTNPPK. Positions 1–25 are disordered; the sequence is MTRVSSVSASCTTTNPPKNTREDMS.

Belongs to the herpesviridae UL79 family.

The chain is Protein U52 from Elephas maximus (Indian elephant).